Here is a 305-residue protein sequence, read N- to C-terminus: Acyl transferase (305 aa).

Residues S116, D213, and H243 each act as charge relay system in the active site.

This sequence belongs to the LuxD family.

Its pathway is lipid metabolism; fatty acid reduction for biolumincescence. Its function is as follows. Acyl transferase is part of the fatty acid reductase system required for aldehyde biosynthesis; it produces fatty acids for the luminescent reaction. This chain is Acyl transferase, found in Shewanella woodyi (strain ATCC 51908 / MS32).